A 180-amino-acid polypeptide reads, in one-letter code: UPF0149 protein XOO1028 (180 aa).

It belongs to the UPF0149 family.

The protein is UPF0149 protein XOO1028 of Xanthomonas oryzae pv. oryzae (strain MAFF 311018).